We begin with the raw amino-acid sequence, 622 residues long: 1,4-alpha-glucan branching enzyme GlgB (622 aa).

Aspartate 300 acts as the Nucleophile in catalysis. The active-site Proton donor is the glutamate 351.

The protein belongs to the glycosyl hydrolase 13 family. GlgB subfamily. Monomer.

It catalyses the reaction Transfers a segment of a (1-&gt;4)-alpha-D-glucan chain to a primary hydroxy group in a similar glucan chain.. It functions in the pathway glycan biosynthesis; glycogen biosynthesis. Catalyzes the formation of the alpha-1,6-glucosidic linkages in glycogen by scission of a 1,4-alpha-linked oligosaccharide from growing alpha-1,4-glucan chains and the subsequent attachment of the oligosaccharide to the alpha-1,6 position. The chain is 1,4-alpha-glucan branching enzyme GlgB from Streptococcus agalactiae serotype III (strain NEM316).